The chain runs to 349 residues: Dihydroorotate dehydrogenase (quinone) (349 aa).

Residues 67-71 (AGLDK) and threonine 91 each bind FMN. Lysine 71 is a substrate binding site. 116–120 (NRLGF) provides a ligand contact to substrate. FMN-binding residues include asparagine 147 and asparagine 180. Asparagine 180 provides a ligand contact to substrate. Residue serine 183 is the Nucleophile of the active site. Residue asparagine 185 coordinates substrate. 2 residues coordinate FMN: lysine 225 and threonine 253. 254–255 (NT) is a substrate binding site. Residues glycine 276, glycine 305, and 326-327 (YT) each bind FMN.

This sequence belongs to the dihydroorotate dehydrogenase family. Type 2 subfamily. In terms of assembly, monomer. It depends on FMN as a cofactor.

The protein resides in the cell membrane. It catalyses the reaction (S)-dihydroorotate + a quinone = orotate + a quinol. It participates in pyrimidine metabolism; UMP biosynthesis via de novo pathway; orotate from (S)-dihydroorotate (quinone route): step 1/1. Its function is as follows. Catalyzes the conversion of dihydroorotate to orotate with quinone as electron acceptor. This is Dihydroorotate dehydrogenase (quinone) from Bordetella pertussis (strain Tohama I / ATCC BAA-589 / NCTC 13251).